The following is a 284-amino-acid chain: Nucleotide-binding protein NGK_0463 (284 aa).

Residue 8-15 (GLSGSGKS) coordinates ATP. Position 58–61 (58–61 (DVRS)) interacts with GTP.

This sequence belongs to the RapZ-like family.

Displays ATPase and GTPase activities. The protein is Nucleotide-binding protein NGK_0463 of Neisseria gonorrhoeae (strain NCCP11945).